The sequence spans 144 residues: UPF0547 protein C16orf87 homolog (144 aa).

The disordered stretch occupies residues 33–112; sequence HAKQSQRLPP…EEKEKQEKEV (80 aa). Polar residues predominate over residues 35 to 45; it reads KQSQRLPPTSE. Basic residues predominate over residues 50 to 62; it reads PKRRRTERIKRER. Basic and acidic residues-rich tracts occupy residues 63–74 and 99–112; these read IHTAVNRDLENR and KKHEEEKEKQEKEV. Residues 94 to 122 are a coiled coil; sequence KTATTKKHEEEKEKQEKEVDMYANLSDEK.

The protein belongs to the UPF0547 family.

The sequence is that of UPF0547 protein C16orf87 homolog from Xenopus laevis (African clawed frog).